The primary structure comprises 459 residues: UDP-N-acetylmuramoylalanine--D-glutamate ligase (459 aa).

120-126 (GSNGKTT) is an ATP binding site.

It belongs to the MurCDEF family.

It localises to the cytoplasm. The catalysed reaction is UDP-N-acetyl-alpha-D-muramoyl-L-alanine + D-glutamate + ATP = UDP-N-acetyl-alpha-D-muramoyl-L-alanyl-D-glutamate + ADP + phosphate + H(+). The protein operates within cell wall biogenesis; peptidoglycan biosynthesis. Cell wall formation. Catalyzes the addition of glutamate to the nucleotide precursor UDP-N-acetylmuramoyl-L-alanine (UMA). This is UDP-N-acetylmuramoylalanine--D-glutamate ligase from Lactobacillus helveticus (strain DPC 4571).